The sequence spans 793 residues: Phenylalanine--tRNA ligase beta subunit (793 aa).

The tRNA-binding domain maps to 39–154 (TCSFSSIITA…ENTPLGESAC (116 aa)). Positions 403–481 (PQASTLSFRT…QPWKVENKKA (79 aa)) constitute a B5 domain. Residues aspartate 457, aspartate 463, glutamate 466, and glutamate 467 each contribute to the Mg(2+) site. An FDX-ACB domain is found at 697-793 (PIYPSSFRDI…QINDTKGTID (97 aa)).

It belongs to the phenylalanyl-tRNA synthetase beta subunit family. Type 1 subfamily. Tetramer of two alpha and two beta subunits. The cofactor is Mg(2+).

The protein localises to the cytoplasm. The enzyme catalyses tRNA(Phe) + L-phenylalanine + ATP = L-phenylalanyl-tRNA(Phe) + AMP + diphosphate + H(+). This is Phenylalanine--tRNA ligase beta subunit from Chlamydia caviae (strain ATCC VR-813 / DSM 19441 / 03DC25 / GPIC) (Chlamydophila caviae).